Here is a 104-residue protein sequence, read N- to C-terminus: Large ribosomal subunit protein uL24 (104 aa).

The protein belongs to the universal ribosomal protein uL24 family. As to quaternary structure, part of the 50S ribosomal subunit.

In terms of biological role, one of two assembly initiator proteins, it binds directly to the 5'-end of the 23S rRNA, where it nucleates assembly of the 50S subunit. Functionally, one of the proteins that surrounds the polypeptide exit tunnel on the outside of the subunit. This Pseudomonas fluorescens (strain ATCC BAA-477 / NRRL B-23932 / Pf-5) protein is Large ribosomal subunit protein uL24.